A 251-amino-acid chain; its full sequence is uncharacterized protein (251 aa).

Residue 12-36 coordinates NADP(+); that stretch reads VVTGASSGIGEATARTLAAQGFHVV. Serine 136 lines the substrate pocket. Tyrosine 149 serves as the catalytic Proton acceptor.

Belongs to the short-chain dehydrogenases/reductases (SDR) family.

This is an uncharacterized protein from Mycobacterium tuberculosis (strain CDC 1551 / Oshkosh).